A 232-amino-acid polypeptide reads, in one-letter code: Probable caffeoyl-CoA O-methyltransferase At4g26220 (232 aa).

Lys7 contributes to the substrate binding site. S-adenosyl-L-methionine-binding positions include Thr49, Glu71, 73-74 (GV), Ser79, Asp97, and Ala126. Asp149 contacts substrate. Residue Asp149 coordinates a divalent metal cation. Asp151 is an S-adenosyl-L-methionine binding site. Residues Asp175 and Asn176 each contribute to the a divalent metal cation site.

This sequence belongs to the class I-like SAM-binding methyltransferase superfamily. Cation-dependent O-methyltransferase family. CCoAMT subfamily. It depends on a divalent metal cation as a cofactor.

It carries out the reaction (E)-caffeoyl-CoA + S-adenosyl-L-methionine = (E)-feruloyl-CoA + S-adenosyl-L-homocysteine + H(+). Its pathway is aromatic compound metabolism; phenylpropanoid biosynthesis. Methylates caffeoyl-CoA to feruloyl-CoA and 5-hydroxyferuloyl-CoA to sinapoyl-CoA. Plays a role in the synthesis of feruloylated polysaccharides. Involved in the reinforcement of the plant cell wall. Also involved in the responding to wounding or pathogen challenge by the increased formation of cell wall-bound ferulic acid polymers. This is Probable caffeoyl-CoA O-methyltransferase At4g26220 from Arabidopsis thaliana (Mouse-ear cress).